Reading from the N-terminus, the 386-residue chain is Heavy metal-associated isoprenylated plant protein 5 (386 aa).

Basic and acidic residues predominate over residues 1-16 (MGEVQEGPKVEQEKKP). Positions 1–40 (MGEVQEGPKVEQEKKPAATVVPVETTDGKPKSGGGDSAAA) are disordered. One can recognise an HMA 1 domain in the interval 49-112 (VSAFVYKVDM…KLEEKTKRKV (64 aa)). A metal cation-binding residues include C60 and C63. Residues 129 to 153 (VGEKKADGGDKEAAPPAPAPAAPKE) form a disordered region. Residues 130 to 141 (GEKKADGGDKEA) are compositionally biased toward basic and acidic residues. Positions 153 to 220 (ESVVPLKIRL…KLKRTVEPLV (68 aa)) constitute an HMA 2 domain. Positions 164 and 167 each coordinate a metal cation. Basic and acidic residues-rich tracts occupy residues 223–245 (KKDD…KKEA) and 252–297 (EAKK…KKDG). Positions 223-301 (KKDDGAAENK…EKKKDGGGVP (79 aa)) are disordered. At C383 the chain carries Cysteine methyl ester. C383 carries the S-farnesyl cysteine lipid modification. Residues 384–386 (SVM) constitute a propeptide, removed in mature form.

Belongs to the HIPP family. In terms of processing, efficiently farnesylated in vitro.

Functionally, heavy-metal-binding protein. Involved in disease resistance. The protein is Heavy metal-associated isoprenylated plant protein 5 of Arabidopsis thaliana (Mouse-ear cress).